An 850-amino-acid polypeptide reads, in one-letter code: Probable beta-glucosidase J (850 aa).

N-linked (GlcNAc...) asparagine glycosylation is found at N43 and N52. Residue D254 is part of the active site. The PA14 domain occupies 423 to 583 (TGERGYTFRV…DAETAIKQAV (161 aa)). N-linked (GlcNAc...) asparagine glycosylation is present at N508.

The protein belongs to the glycosyl hydrolase 3 family.

It is found in the secreted. The enzyme catalyses Hydrolysis of terminal, non-reducing beta-D-glucosyl residues with release of beta-D-glucose.. It functions in the pathway glycan metabolism; cellulose degradation. Functionally, beta-glucosidases are one of a number of cellulolytic enzymes involved in the degradation of cellulosic biomass. Catalyzes the last step releasing glucose from the inhibitory cellobiose. The sequence is that of Probable beta-glucosidase J (bglJ) from Emericella nidulans (strain FGSC A4 / ATCC 38163 / CBS 112.46 / NRRL 194 / M139) (Aspergillus nidulans).